Here is a 423-residue protein sequence, read N- to C-terminus: uncharacterized protein (423 aa).

Residues 383–423 (ARGTTGGGGTRSGTSTDGQEDGRKPPVVVIREQPPPGNPPR) form a disordered region.

Belongs to the mycobacterial PPE family.

This is an uncharacterized protein from Mycobacterium tuberculosis (strain CDC 1551 / Oshkosh).